The sequence spans 1151 residues: ATP-dependent helicase/deoxyribonuclease subunit B (1151 aa).

The 273-residue stretch at 1 to 273 folds into the UvrD-like helicase ATP-binding domain; it reads MALRLVLGRA…LALAAGVRVE (273 aa). 8 to 15 serves as a coordination point for ATP; the sequence is GRAGSGKT. The UvrD-like helicase C-terminal domain occupies 282–578; sequence PPRFREAPAL…KLRLIPPALD (297 aa). Residues Cys-788, Cys-1107, Cys-1110, and Cys-1116 each contribute to the [4Fe-4S] cluster site.

The protein belongs to the helicase family. AddB/RexB type 1 subfamily. As to quaternary structure, heterodimer of AddA and AddB. Mg(2+) is required as a cofactor. [4Fe-4S] cluster serves as cofactor.

In terms of biological role, the heterodimer acts as both an ATP-dependent DNA helicase and an ATP-dependent, dual-direction single-stranded exonuclease. Recognizes the chi site generating a DNA molecule suitable for the initiation of homologous recombination. The AddB subunit has 5' -&gt; 3' nuclease activity but not helicase activity. This Moorella thermoacetica (strain ATCC 39073 / JCM 9320) protein is ATP-dependent helicase/deoxyribonuclease subunit B.